A 350-amino-acid polypeptide reads, in one-letter code: NADH-quinone oxidoreductase subunit H (350 aa).

Helical transmembrane passes span 5–25 (FIIEKSVVIVVVFAVTMIMAM), 76–96 (FLFVVGPAIAMSTALMTSAVI), 118–138 (IALLYIFGVLSVGVYGIMIGG), 162–182 (IAMGLSMIALLMMTGTMSLKV), 190–210 (MNWNVFYQPLSFLIFLICSFA), 243–263 (LFAEYASMFISSTIISVLFFG), 284–304 (LLGIAVLFVKICFFIFFYMWV), and 319–339 (LGWRILIPLSIINIMITGAVI).

This sequence belongs to the complex I subunit 1 family. As to quaternary structure, NDH-1 is composed of 14 different subunits. Subunits NuoA, H, J, K, L, M, N constitute the membrane sector of the complex.

The protein localises to the cell inner membrane. It carries out the reaction a quinone + NADH + 5 H(+)(in) = a quinol + NAD(+) + 4 H(+)(out). NDH-1 shuttles electrons from NADH, via FMN and iron-sulfur (Fe-S) centers, to quinones in the respiratory chain. The immediate electron acceptor for the enzyme in this species is believed to be ubiquinone. Couples the redox reaction to proton translocation (for every two electrons transferred, four hydrogen ions are translocated across the cytoplasmic membrane), and thus conserves the redox energy in a proton gradient. This subunit may bind ubiquinone. This chain is NADH-quinone oxidoreductase subunit H, found in Flavobacterium johnsoniae (strain ATCC 17061 / DSM 2064 / JCM 8514 / BCRC 14874 / CCUG 350202 / NBRC 14942 / NCIMB 11054 / UW101) (Cytophaga johnsonae).